Here is a 309-residue protein sequence, read N- to C-terminus: uncharacterized protein (309 aa).

The region spanning 11-87 (QRLDTFLATL…FPLDILYEDE (77 aa)) is the S4 RNA-binding domain. D131 is a catalytic residue.

This sequence belongs to the pseudouridine synthase RluA family.

It catalyses the reaction a uridine in RNA = a pseudouridine in RNA. This is an uncharacterized protein from Mycoplasma pneumoniae (strain ATCC 29342 / M129 / Subtype 1) (Mycoplasmoides pneumoniae).